The sequence spans 146 residues: Large ribosomal subunit protein uL15 (146 aa).

The segment at 1–55 is disordered; the sequence is MGLRLNELSPGVGAKKTAQRRGRGIGSGLGKTGGRGVKGQKSRSGSSIRSGFEGG. Positions 24 to 37 are enriched in gly residues; sequence GIGSGLGKTGGRGV.

Belongs to the universal ribosomal protein uL15 family. Part of the 50S ribosomal subunit.

Functionally, binds to the 23S rRNA. This Psychrobacter cryohalolentis (strain ATCC BAA-1226 / DSM 17306 / VKM B-2378 / K5) protein is Large ribosomal subunit protein uL15.